The primary structure comprises 229 residues: DNA mismatch repair protein MutH (229 aa).

It belongs to the MutH family.

The protein resides in the cytoplasm. Sequence-specific endonuclease that cleaves unmethylated GATC sequences. It is involved in DNA mismatch repair. This is DNA mismatch repair protein MutH from Escherichia coli O17:K52:H18 (strain UMN026 / ExPEC).